An 855-amino-acid polypeptide reads, in one-letter code: Inactive rhomboid protein 1 (855 aa).

Topologically, residues 1 to 411 are cytoplasmic; that stretch reads MSEARRDSTS…HRPFFTYWLT (411 aa). A phosphoserine mark is found at serine 76 and serine 176. Residues threonine 180 and threonine 183 each carry the phosphothreonine modification. Position 390 is a phosphoserine (serine 390). A helical transmembrane segment spans residues 412 to 432; that stretch reads FVHSLVTILAVCIYGIAPVGF. Topologically, residues 433–655 are lumenal; sequence SQHETVDSVL…NPEVPDQFYR (223 aa). N-linked (GlcNAc...) asparagine glycosylation occurs at asparagine 583. The helical transmembrane segment at 656-676 threads the bilayer; it reads LWLSLFLHAGILHCLVSICFQ. Residues 677–691 lie on the Cytoplasmic side of the membrane; the sequence is MTVLRDLEKLAGWHR. A helical membrane pass occupies residues 692-712; that stretch reads IAIIYLLSGVTGNLASAIFLP. Over 713–714 the chain is Lumenal; sequence YR. Residues 715–735 form a helical membrane-spanning segment; that stretch reads AEVGPAGSQFGILACLFVELF. Topologically, residues 736–746 are cytoplasmic; the sequence is QSWQILARPWR. A helical membrane pass occupies residues 747–767; sequence AFFKLLAVVLFLFTFGLLPWI. Over 768 to 772 the chain is Lumenal; sequence DNFAH. Residues 773–793 traverse the membrane as a helical segment; the sequence is ISGFISGLFLSFAFLPYISFG. At 794–803 the chain is on the cytoplasmic side; sequence KFDLYRKRCQ. A helical membrane pass occupies residues 804 to 824; the sequence is IIIFQVVFLGLLAGLVVLFYV. The Lumenal portion of the chain corresponds to 825-855; the sequence is YPVRCEWCEFLTCIPFTDKFCEKYELDAQLH.

It belongs to the peptidase S54 family. As to quaternary structure, homodimer, or homooligomer. Interacts with TGFA and HBEGF. Interacts with EGF; may retain EGF in the endoplasmic reticulum and regulates its degradation through the endoplasmic reticulum-associated degradation (ERAD). Interacts (via cytoplasmic N-terminus) with FRMD8/iTAP; this interaction leads to mutual protein stabilization. Interacts with ADAM17/TACE. N-glycosylated. In terms of tissue distribution, highly expressed in cerebellum, cerebrum, heart, skeletal muscle, placenta, pancreatic islet and testis. Detected at lower levels in colon, kidney, small intestine and lung.

Its subcellular location is the endoplasmic reticulum membrane. It is found in the golgi apparatus membrane. Regulates ADAM17 protease, a sheddase of the epidermal growth factor (EGF) receptor ligands and TNF, thereby plays a role in sleep, cell survival, proliferation, migration and inflammation. Does not exhibit any protease activity on its own. In Homo sapiens (Human), this protein is Inactive rhomboid protein 1 (RHBDF1).